We begin with the raw amino-acid sequence, 160 residues long: Arginine repressor (160 aa).

This sequence belongs to the ArgR family.

The protein resides in the cytoplasm. It participates in amino-acid biosynthesis; L-arginine biosynthesis [regulation]. Regulates arginine biosynthesis genes. In Anaeromyxobacter dehalogenans (strain 2CP-1 / ATCC BAA-258), this protein is Arginine repressor.